The chain runs to 87 residues: Protein anon-73B1 (87 aa).

The chain crosses the membrane as a helical span at residues 25–47 (LLIRYGLYVGALFQFVCISAAVL). The tract at residues 51-87 (NPDGQSNPESGEVTEREGEPVRTRLHKIRKLEKKKRR) is disordered. Residues 63 to 72 (VTEREGEPVR) are compositionally biased toward basic and acidic residues. Over residues 73 to 87 (TRLHKIRKLEKKKRR) the composition is skewed to basic residues.

The protein belongs to the UPF0239 family.

It localises to the membrane. The sequence is that of Protein anon-73B1 (anon-73B1) from Drosophila melanogaster (Fruit fly).